We begin with the raw amino-acid sequence, 37 residues long: Esculentin-2L (37 aa).

Cys31 and Cys37 are disulfide-bonded.

In terms of tissue distribution, expressed by the skin glands.

Its subcellular location is the secreted. Functionally, antibacterial activity against Gram-positive bacterium S.aureus and Gram-negative bacterium E.coli. Has activity against C.albicans. The chain is Esculentin-2L from Rana luteiventris (Columbia spotted frog).